A 91-amino-acid chain; its full sequence is Antifungal protein opdH (91 aa).

A signal peptide spans 1-18 (MQFSSLSLVFLAVIGAIA). The propeptide occupies 19-33 (NPIAVDSELENRDVQ). Disulfide bonds link cysteine 41-cysteine 69, cysteine 48-cysteine 76, and cysteine 61-cysteine 87.

Belongs to the antifungal protein pafB family.

Its subcellular location is the secreted. The protein resides in the host cytoplasm. In terms of biological role, antifungal protein; part of the gene cluster that mediates the biosynthesis of oxopyrrolidines, polyketide-amino acid hybrid compounds with feature structures of tetramic acid. Acts as an inhibitor of growth of various molds and yeasts. The sequence is that of Antifungal protein opdH from Penicillium oxalicum (strain 114-2 / CGMCC 5302) (Penicillium decumbens).